A 232-amino-acid polypeptide reads, in one-letter code: Chaperone protein LpfB (232 aa).

The signal sequence occupies residues 1 to 23 (MNRSRLISCTALVLALIAQNSFA).

It belongs to the periplasmic pilus chaperone family.

Its subcellular location is the periplasm. Required for the biogenesis of long polar fimbria; binds and interact with LpfA. This is Chaperone protein LpfB (lpfB) from Salmonella typhimurium (strain LT2 / SGSC1412 / ATCC 700720).